A 378-amino-acid chain; its full sequence is Cobalt-precorrin-5B C(1)-methyltransferase (378 aa).

The protein belongs to the CbiD family.

It carries out the reaction Co-precorrin-5B + S-adenosyl-L-methionine = Co-precorrin-6A + S-adenosyl-L-homocysteine. It participates in cofactor biosynthesis; adenosylcobalamin biosynthesis; cob(II)yrinate a,c-diamide from sirohydrochlorin (anaerobic route): step 6/10. Functionally, catalyzes the methylation of C-1 in cobalt-precorrin-5B to form cobalt-precorrin-6A. In Synechocystis sp. (strain ATCC 27184 / PCC 6803 / Kazusa), this protein is Cobalt-precorrin-5B C(1)-methyltransferase.